An 849-amino-acid polypeptide reads, in one-letter code: Trehalose-phosphatase (849 aa).

The segment at Met1–Thr558 is glycosyltransferase.

The protein in the N-terminal section; belongs to the glycosyltransferase 20 family. In the C-terminal section; belongs to the trehalose phosphatase family. The cofactor is Mg(2+).

The protein localises to the cytoplasm. It is found in the nucleus. The enzyme catalyses alpha,alpha-trehalose 6-phosphate + H2O = alpha,alpha-trehalose + phosphate. The protein operates within carbohydrate biosynthesis. Phosphatase catalytic subunit of the trehalose synthase complex that catalyzes the production of trehalose from glucose-6-phosphate and UDP-glucose in a two step process. This is Trehalose-phosphatase (tps2) from Schizosaccharomyces pombe (strain 972 / ATCC 24843) (Fission yeast).